A 239-amino-acid chain; its full sequence is MAKLGVNIDHVATIRQARGGVEPDPVAAAAIAELAGADGITIHLREDRRHIQDRDLKLLRQTVKTRLNLEMAATDEMVNIAISVKPDMCTLVPEKRQELTTEGGLDVRLNLESIKEAVQRLQDGGLIVSLFIDPDPDQIKAADKTGADYIEIHTGAFAEARDWKSEQAELAKIENAIKLAGKLGMGINAGHGLNYANIRKVAALGGIEEYNIGHSIISKAVLVGLDRAVRDMVDLVKYA.

Residue Asn7 participates in 3-amino-2-oxopropyl phosphate binding. 1-deoxy-D-xylulose 5-phosphate is bound at residue 9–10 (DH). Arg18 is a binding site for 3-amino-2-oxopropyl phosphate. The active-site Proton acceptor is the His43. Residues Arg45 and His50 each contribute to the 1-deoxy-D-xylulose 5-phosphate site. Catalysis depends on Glu70, which acts as the Proton acceptor. Position 100 (Thr100) interacts with 1-deoxy-D-xylulose 5-phosphate. The Proton donor role is filled by His191. Residues Gly192 and 213-214 (GH) each bind 3-amino-2-oxopropyl phosphate.

Belongs to the PNP synthase family. Homooctamer; tetramer of dimers.

Its subcellular location is the cytoplasm. It carries out the reaction 3-amino-2-oxopropyl phosphate + 1-deoxy-D-xylulose 5-phosphate = pyridoxine 5'-phosphate + phosphate + 2 H2O + H(+). It participates in cofactor biosynthesis; pyridoxine 5'-phosphate biosynthesis; pyridoxine 5'-phosphate from D-erythrose 4-phosphate: step 5/5. Catalyzes the complicated ring closure reaction between the two acyclic compounds 1-deoxy-D-xylulose-5-phosphate (DXP) and 3-amino-2-oxopropyl phosphate (1-amino-acetone-3-phosphate or AAP) to form pyridoxine 5'-phosphate (PNP) and inorganic phosphate. The protein is Pyridoxine 5'-phosphate synthase of Geotalea uraniireducens (strain Rf4) (Geobacter uraniireducens).